A 285-amino-acid chain; its full sequence is 2,3,4,5-tetrahydropyridine-2,6-dicarboxylate N-succinyltransferase (285 aa).

The substrate site is built by Arg111 and Asp148.

The protein belongs to the transferase hexapeptide repeat family. As to quaternary structure, homotrimer.

The protein localises to the cytoplasm. It carries out the reaction (S)-2,3,4,5-tetrahydrodipicolinate + succinyl-CoA + H2O = (S)-2-succinylamino-6-oxoheptanedioate + CoA. Its pathway is amino-acid biosynthesis; L-lysine biosynthesis via DAP pathway; LL-2,6-diaminopimelate from (S)-tetrahydrodipicolinate (succinylase route): step 1/3. In Rhizobium meliloti (strain 1021) (Ensifer meliloti), this protein is 2,3,4,5-tetrahydropyridine-2,6-dicarboxylate N-succinyltransferase.